Reading from the N-terminus, the 708-residue chain is Lactotransferrin (708 aa).

The first 19 residues, 1-19 (MKLFFPALLSLGALGLCLA), serve as a signal peptide directing secretion. Transferrin-like domains follow at residues 25-352 (VRWC…GLRE) and 364-693 (VVWC…KLRR). Disulfide bonds link C28/C64 and C38/C55. The interaction with E.coli ompC stretch occupies residues 44–51 (RMKKVRGP). Residue D79 participates in Fe(3+) binding. Residue K92 is part of the active site. Y111 contacts Fe(3+). Disulfide bonds link C134–C217, C176–C192, C179–C202, C189–C200, and C250–C264. T136, R140, A142, and G143 together coordinate hydrogencarbonate. Y211 serves as a coordination point for Fe(3+). The N-linked (GlcNAc...) asparagine glycan is linked to N252. H272 contacts Fe(3+). Residue S278 is the Nucleophile of the active site. Cystine bridges form between C367–C399 and C377–C390. N385 carries N-linked (GlcNAc...) asparagine glycosylation. Fe(3+) is bound by residues D414 and Y452. Cystine bridges form between C424-C703, C444-C666, C476-C551, C500-C694, C510-C524, C521-C534, C592-C606, and C644-C649. Hydrogencarbonate contacts are provided by T478, R482, A484, and G485. An N-linked (GlcNAc...) asparagine glycan is attached at N537. A Fe(3+)-binding site is contributed by Y545. N594 is a glycosylation site (N-linked (GlcNAc...) asparagine). H614 is a Fe(3+) binding site.

Belongs to the transferrin family. In terms of assembly, monomer. Found in a complex with LTF, CLU, EPPIN and SEMG1. Interacts with E.coli outer membrane protein C (OmpC). Found in a complex with MPO and LTF; interacts directly with CP, allows Fe(3+) incorporation into LTF and activation of CP ferroxidase activity. Poly-N-acetyllactosaminic carbohydrate moiety seems to be needed for TLR4 activation.

Its subcellular location is the secreted. It localises to the cytoplasmic granule. In terms of biological role, transferrins are iron binding transport proteins which can bind two Fe(3+) ions in association with the binding of an anion, usually bicarbonate. Functionally, major iron-binding and multifunctional protein found in exocrine fluids such as breast milk and mucosal secretions. Has antimicrobial activity, which depends on the extracellular cation concentration. Antimicrobial properties include bacteriostasis, which is related to its ability to sequester free iron and thus inhibit microbial growth, as well as direct bactericidal properties leading to the release of lipopolysaccharides from the bacterial outer membrane. Can also prevent bacterial biofilm development in P.aeruginosa infection. Has weak antifungal activity against C.albicans. Has anabolic, differentiating and anti-apoptotic effects on osteoblasts and can also inhibit osteoclastogenesis, possibly playing a role in the regulation of bone growth. Promotes binding of species C adenoviruses to epithelial cells, promoting adenovirus infection. Can inhibit papillomavirus infections. Stimulates the TLR4 signaling pathway leading to NF-kappa-B activation and subsequent pro-inflammatory cytokine production while also interfering with the lipopolysaccharide (LPS)-stimulated TLR4 signaling. Inhibits neutrophil granulocyte migration to sites of apoptosis, when secreted by apoptotic cells. Stimulates VEGFA-mediated endothelial cell migration and proliferation. Binds heparin, chondroitin sulfate and possibly other glycosaminoglycans (GAGs). Also binds specifically to pneumococcal surface protein A (PspA), the lipid A portion of bacterial lipopolysaccharide (LPS), lysozyme and DNA. Its function is as follows. Lactoferricin binds to the bacterial surface and is crucial for the bactericidal functions. Has some antiviral activity against papillomavirus infection. N-terminal region shows strong antifungal activity against C.albicans. Contains two BBXB heparin-binding consensus sequences that appear to form the predominate functional GAG-binding site. The lactotransferrin transferrin-like domain 1 functions as a serine protease of the peptidase S60 family that cuts arginine rich regions. This function contributes to the antimicrobial activity. Shows a preferential cleavage at -Arg-Ser-Arg-Arg-|- and -Arg-Arg-Ser-Arg-|-, and of Z-Phe-Arg-|-aminomethylcoumarin sites. This Camelus dromedarius (Dromedary) protein is Lactotransferrin (LTF).